The sequence spans 400 residues: S-adenosylmethionine synthase (400 aa).

Residue His-15 coordinates ATP. Position 17 (Asp-17) interacts with Mg(2+). Position 43 (Glu-43) interacts with K(+). Residues Glu-56 and Gln-99 each coordinate L-methionine. Residues 99–109 form a flexible loop region; it reads QSLEIGAGVDT. Residues 174-176, Asp-254, 260-261, Ala-277, and Lys-281 contribute to the ATP site; these read DGK and RK. L-methionine is bound at residue Asp-254. L-methionine is bound at residue Lys-285.

It belongs to the AdoMet synthase family. Homotetramer; dimer of dimers. Requires Mg(2+) as cofactor. It depends on K(+) as a cofactor.

The protein resides in the cytoplasm. The catalysed reaction is L-methionine + ATP + H2O = S-adenosyl-L-methionine + phosphate + diphosphate. It participates in amino-acid biosynthesis; S-adenosyl-L-methionine biosynthesis; S-adenosyl-L-methionine from L-methionine: step 1/1. In terms of biological role, catalyzes the formation of S-adenosylmethionine (AdoMet) from methionine and ATP. The overall synthetic reaction is composed of two sequential steps, AdoMet formation and the subsequent tripolyphosphate hydrolysis which occurs prior to release of AdoMet from the enzyme. This chain is S-adenosylmethionine synthase, found in Corynebacterium kroppenstedtii (strain DSM 44385 / JCM 11950 / CIP 105744 / CCUG 35717).